Here is a 262-residue protein sequence, read N- to C-terminus: Purine nucleoside phosphorylase SSP1584 (262 aa).

His-79, Cys-124, and His-141 together coordinate Zn(2+).

It belongs to the purine nucleoside phosphorylase YfiH/LACC1 family. As to quaternary structure, homodimer. It depends on Cu(2+) as a cofactor. Requires Zn(2+) as cofactor.

The enzyme catalyses adenosine + phosphate = alpha-D-ribose 1-phosphate + adenine. The catalysed reaction is S-methyl-5'-thioadenosine + phosphate = 5-(methylsulfanyl)-alpha-D-ribose 1-phosphate + adenine. It carries out the reaction inosine + phosphate = alpha-D-ribose 1-phosphate + hypoxanthine. It catalyses the reaction adenosine + H2O + H(+) = inosine + NH4(+). Purine nucleoside enzyme that catalyzes the phosphorolysis of adenosine and inosine nucleosides, yielding D-ribose 1-phosphate and the respective free bases, adenine and hypoxanthine. Also catalyzes the phosphorolysis of S-methyl-5'-thioadenosine into adenine and S-methyl-5-thio-alpha-D-ribose 1-phosphate. Also has adenosine deaminase activity. The protein is Purine nucleoside phosphorylase SSP1584 of Staphylococcus saprophyticus subsp. saprophyticus (strain ATCC 15305 / DSM 20229 / NCIMB 8711 / NCTC 7292 / S-41).